The following is a 250-amino-acid chain: 2,3-bisphosphoglycerate-dependent phosphoglycerate mutase (250 aa).

Substrate contacts are provided by residues 10–17 (RHGESQWN), 23–24 (TG), Arg62, 89–92 (ERHY), Lys100, 116–117 (RR), and 185–186 (GN). His11 acts as the Tele-phosphohistidine intermediate in catalysis. The active-site Proton donor/acceptor is the Glu89.

This sequence belongs to the phosphoglycerate mutase family. BPG-dependent PGAM subfamily. As to quaternary structure, homodimer.

It catalyses the reaction (2R)-2-phosphoglycerate = (2R)-3-phosphoglycerate. It participates in carbohydrate degradation; glycolysis; pyruvate from D-glyceraldehyde 3-phosphate: step 3/5. In terms of biological role, catalyzes the interconversion of 2-phosphoglycerate and 3-phosphoglycerate. In Pectobacterium atrosepticum (strain SCRI 1043 / ATCC BAA-672) (Erwinia carotovora subsp. atroseptica), this protein is 2,3-bisphosphoglycerate-dependent phosphoglycerate mutase.